The chain runs to 137 residues: Proofreading thioesterase EntH (137 aa).

Glu63 acts as the Nucleophile or proton acceptor in catalysis.

It belongs to the thioesterase PaaI family. As to quaternary structure, homotetramer. Dimer of dimers. Interacts specifically with the aryl carrier protein (ArCP) domain of EntB.

Its subcellular location is the cytoplasm. The protein operates within siderophore biosynthesis; enterobactin biosynthesis. Its function is as follows. Required for optimal enterobactin synthesis. Acts as a proofreading enzyme that prevents EntB misacylation by hydrolyzing the thioester bound existing between EntB and wrongly charged molecules. The chain is Proofreading thioesterase EntH from Shigella sonnei (strain Ss046).